The following is a 185-amino-acid chain: Putative manganese efflux pump MntP (185 aa).

6 consecutive transmembrane segments (helical) span residues 8 to 28 (LFVI…SIGL), 42 to 62 (ISFG…GVLF), 66 to 86 (ILVI…ILML), 103 to 123 (MYFI…FTVL), 137 to 157 (IFIG…SGYL), and 165 to 185 (KYAN…MIFM).

The protein belongs to the MntP (TC 9.B.29) family.

Its subcellular location is the cell membrane. In terms of biological role, probably functions as a manganese efflux pump. The polypeptide is Putative manganese efflux pump MntP (Clostridium novyi (strain NT)).